A 247-amino-acid polypeptide reads, in one-letter code: Eukaryotic translation initiation factor 3 subunit J (247 aa).

Disordered stretches follow at residues 1-64 and 77-101; these read MADW…KTLK and EEKR…EEQM. The segment covering 24–45 has biased composition (acidic residues); that stretch reads EGEDEDDDIKESWDDDDEDEKK. Residues 43–108 adopt a coiled-coil conformation; sequence EKKEDEAKNT…EQMAEKLRRQ (66 aa).

It belongs to the eIF-3 subunit J family. As to quaternary structure, component of the eukaryotic translation initiation factor 3 (eIF-3) complex.

It is found in the cytoplasm. Functionally, component of the eukaryotic translation initiation factor 3 (eIF-3) complex, which is involved in protein synthesis of a specialized repertoire of mRNAs and, together with other initiation factors, stimulates binding of mRNA and methionyl-tRNAi to the 40S ribosome. The eIF-3 complex specifically targets and initiates translation of a subset of mRNAs involved in cell proliferation. This is Eukaryotic translation initiation factor 3 subunit J from Nematostella vectensis (Starlet sea anemone).